The chain runs to 389 residues: Large envelope protein (389 aa).

Position 1 is an N-acetylmethionine (Met-1). The N-myristoyl glycine; by host moiety is linked to residue Gly-2. Residues 2–108 (GQNLSTSNPL…PPLRTTHPQA (107 aa)) form a pre-S1 region. Positions 2 to 163 (GQNLSTSNPL…FSRIGDPALN (162 aa)) are pre-S. Topologically, residues 2–170 (GQNLSTSNPL…ALNMENITSG (169 aa)) are virion surface; in external conformation. At 2–242 (GQNLSTSNPL…PGYRWMCLRR (241 aa)) the chain is on the intravirion; in internal conformation side. The interval 76–102 (TLPANPPPASTNRQSGRQPTPLSPPLR) is disordered. Positions 85–95 (STNRQSGRQPT) are enriched in polar residues. The segment at 109–163 (MHWNSTTFHQTLQDPRVRGLYFPAGGSSSGTVNPVPTTTSPISSIFSRIGDPALN) is pre-S2. Residues 171-191 (FLGPLLVLQAGFFLLTRILTI) form a helical membrane-spanning segment. The Intravirion; in external conformation segment spans residues 192-242 (PQSLDSWWTSLNFLGGTTVCLGQNSQSPISNHSPTSCPPTCPGYRWMCLRR). A helical membrane pass occupies residues 243-263 (FIIFLFILLLCLIFLLVLLDY). Topologically, residues 264–337 (QGMLPVCPLI…WASARFSWLS (74 aa)) are virion surface. Asn-309 is a glycosylation site (N-linked (GlcNAc...) asparagine; by host). Residues 338-358 (LLVPFVQWFVGLSPIVWLSVI) traverse the membrane as a helical segment. Residues 359–364 (WMMWYW) lie on the Intravirion side of the membrane. Residues 365 to 387 (GPSLYSILSPFLPLLPIFFCLWA) traverse the membrane as a helical segment. At 388–389 (YI) the chain is on the virion surface side.

This sequence belongs to the orthohepadnavirus major surface antigen family. As to quaternary structure, in its internal form (Li-HBsAg), interacts with the capsid protein and with the isoform S. Interacts with host chaperone CANX. In terms of assembly, associates with host chaperone CANX through its pre-S2 N glycan; this association may be essential for isoform M proper secretion. Interacts with isoform L. Interacts with the antigens of satellite virus HDV (HDVAgs); this interaction is required for encapsidation of HDV genomic RNA. Post-translationally, isoform M is N-terminally acetylated by host at a ratio of 90%, and N-glycosylated by host at the pre-S2 region. In terms of processing, myristoylated.

The protein resides in the virion membrane. Its function is as follows. The large envelope protein exists in two topological conformations, one which is termed 'external' or Le-HBsAg and the other 'internal' or Li-HBsAg. In its external conformation the protein attaches the virus to cell receptors and thereby initiating infection. This interaction determines the species specificity and liver tropism. This attachment induces virion internalization predominantly through caveolin-mediated endocytosis. The large envelope protein also assures fusion between virion membrane and endosomal membrane. In its internal conformation the protein plays a role in virion morphogenesis and mediates the contact with the nucleocapsid like a matrix protein. The middle envelope protein plays an important role in the budding of the virion. It is involved in the induction of budding in a nucleocapsid independent way. In this process the majority of envelope proteins bud to form subviral lipoprotein particles of 22 nm of diameter that do not contain a nucleocapsid. The sequence is that of Large envelope protein from Hepatitis B virus genotype D subtype adw (isolate United Kingdom/adyw/1979) (HBV-D).